We begin with the raw amino-acid sequence, 417 residues long: Gamma-glutamyl phosphate reductase (417 aa).

This sequence belongs to the gamma-glutamyl phosphate reductase family.

It is found in the cytoplasm. It carries out the reaction L-glutamate 5-semialdehyde + phosphate + NADP(+) = L-glutamyl 5-phosphate + NADPH + H(+). It functions in the pathway amino-acid biosynthesis; L-proline biosynthesis; L-glutamate 5-semialdehyde from L-glutamate: step 2/2. Catalyzes the NADPH-dependent reduction of L-glutamate 5-phosphate into L-glutamate 5-semialdehyde and phosphate. The product spontaneously undergoes cyclization to form 1-pyrroline-5-carboxylate. The protein is Gamma-glutamyl phosphate reductase of Haemophilus influenzae (strain PittEE).